The primary structure comprises 191 residues: UPF0149 protein VC_2476 (191 aa).

Belongs to the UPF0149 family.

This Vibrio cholerae serotype O1 (strain ATCC 39315 / El Tor Inaba N16961) protein is UPF0149 protein VC_2476.